The following is a 137-amino-acid chain: Proofreading thioesterase EntH (137 aa).

The active-site Nucleophile or proton acceptor is Glu-63.

This sequence belongs to the thioesterase PaaI family. As to quaternary structure, homotetramer. Dimer of dimers. Interacts specifically with the aryl carrier protein (ArCP) domain of EntB.

It localises to the cytoplasm. The protein operates within siderophore biosynthesis; enterobactin biosynthesis. In terms of biological role, required for optimal enterobactin synthesis. Acts as a proofreading enzyme that prevents EntB misacylation by hydrolyzing the thioester bound existing between EntB and wrongly charged molecules. The protein is Proofreading thioesterase EntH of Enterobacter lignolyticus (strain SCF1).